We begin with the raw amino-acid sequence, 320 residues long: Glycerol-3-phosphate dehydrogenase [NAD(P)+] (320 aa).

NADPH-binding residues include F11, R30, and K102. Residues K102, G130, and S132 each coordinate sn-glycerol 3-phosphate. Position 134 (A134) interacts with NADPH. 5 residues coordinate sn-glycerol 3-phosphate: K185, D238, S248, R249, and N250. The active-site Proton acceptor is K185. Position 249 (R249) interacts with NADPH. E270 lines the NADPH pocket.

This sequence belongs to the NAD-dependent glycerol-3-phosphate dehydrogenase family.

It is found in the cytoplasm. It carries out the reaction sn-glycerol 3-phosphate + NAD(+) = dihydroxyacetone phosphate + NADH + H(+). It catalyses the reaction sn-glycerol 3-phosphate + NADP(+) = dihydroxyacetone phosphate + NADPH + H(+). It functions in the pathway membrane lipid metabolism; glycerophospholipid metabolism. Catalyzes the reduction of the glycolytic intermediate dihydroxyacetone phosphate (DHAP) to sn-glycerol 3-phosphate (G3P), the key precursor for phospholipid synthesis. The sequence is that of Glycerol-3-phosphate dehydrogenase [NAD(P)+] from Ruegeria sp. (strain TM1040) (Silicibacter sp.).